The sequence spans 209 residues: MHILHIASSPRGERSVSLKLASRYLETLTSLHPESTVDVLDVWTIDLLPFDGPALEAKYADLQGVQMSDEQQAVWKQIHALGERFHRADVILFSVPMWNFGVPYRLKHLIDSVSQRGVLFEFDAQGMRGLLKGKNVVVFASRGVALGEDFPTEAYDHQVAYLKTWARMVGIPTIDAVLSEATLADPATAEANFTAALAEASKLAAAVQP.

FMN contacts are provided by residues Ser9, 15–17 (SVS), and 97–100 (MWNF).

This sequence belongs to the azoreductase type 1 family. In terms of assembly, homodimer. The cofactor is FMN.

It catalyses the reaction 2 a quinone + NADH + H(+) = 2 a 1,4-benzosemiquinone + NAD(+). It carries out the reaction N,N-dimethyl-1,4-phenylenediamine + anthranilate + 2 NAD(+) = 2-(4-dimethylaminophenyl)diazenylbenzoate + 2 NADH + 2 H(+). In terms of biological role, quinone reductase that provides resistance to thiol-specific stress caused by electrophilic quinones. Its function is as follows. Also exhibits azoreductase activity. Catalyzes the reductive cleavage of the azo bond in aromatic azo compounds to the corresponding amines. The chain is FMN-dependent NADH:quinone oxidoreductase 2 from Pseudomonas syringae pv. tomato (strain ATCC BAA-871 / DC3000).